Consider the following 882-residue polypeptide: Alanine--tRNA ligase (882 aa).

His570, His574, Cys672, and His676 together coordinate Zn(2+).

Belongs to the class-II aminoacyl-tRNA synthetase family. The cofactor is Zn(2+).

Its subcellular location is the cytoplasm. It carries out the reaction tRNA(Ala) + L-alanine + ATP = L-alanyl-tRNA(Ala) + AMP + diphosphate. Functionally, catalyzes the attachment of alanine to tRNA(Ala) in a two-step reaction: alanine is first activated by ATP to form Ala-AMP and then transferred to the acceptor end of tRNA(Ala). Also edits incorrectly charged Ser-tRNA(Ala) and Gly-tRNA(Ala) via its editing domain. The chain is Alanine--tRNA ligase from Xanthomonas campestris pv. campestris (strain ATCC 33913 / DSM 3586 / NCPPB 528 / LMG 568 / P 25).